The sequence spans 225 residues: MSDILKNDWKNYLQSEFQKDYYINLRKFLINEYNSKTIYPNMYDLFNALHFTPYNKVKVVILGQDPYHGPGQAHGLSFSVNPGVKTPPSLINIYKELHTDLGCYIPNNGYLRKWADQGVLLLNTVLTVRAGEANSHKNKGWEEFTNEVIKVLNKKETPIVFILWGNNAISKTDFITNPKHLIIKSVHPSPLSASRGFFGSKPFSKTNNFLISTNQEPIDWQIENI.

Aspartate 65 (proton acceptor) is an active-site residue.

The protein belongs to the uracil-DNA glycosylase (UDG) superfamily. UNG family.

Its subcellular location is the cytoplasm. It catalyses the reaction Hydrolyzes single-stranded DNA or mismatched double-stranded DNA and polynucleotides, releasing free uracil.. Functionally, excises uracil residues from the DNA which can arise as a result of misincorporation of dUMP residues by DNA polymerase or due to deamination of cytosine. The chain is Uracil-DNA glycosylase from Clostridium beijerinckii (strain ATCC 51743 / NCIMB 8052) (Clostridium acetobutylicum).